Here is an 860-residue protein sequence, read N- to C-terminus: MSKINMNEDIDKDFSSHTPMMQQYLKLKAQHPEILLFYRMGDFYELFYDDAKRASQLLDISLTKRGASAGEPIPMAGIPHHAVENYLAKLVNQGESVAICEQIGDPATSKGPVERKVVRIVTPGTISDEALLQERQDNLLAAIWQDGKGYGYATLDISSGRFRLSEPADRETMAAELQRTNPAELLYAEDFAEMALIEGRRGLRRRPLWEFEIDTARQQLNLQFGTRDLVGFGVENASRGLCAAGCLLQYVKDTQRTSLPHIRSITMERQQDSIIMDAATRRNLEITQNLAGGIENTLAAVLDCTVTPMGSRMLKRWLHMPIRNTDILRERQQTIGALQDTVSELQPVLRQVGDLERILARLALRTARPRDLARMRHAFQQLPELHAQLETVDSAPVQALRKKMGDFAELRDLLERAIIDAPPVLVRDGGVIAPGYHQELDEWRALADGATDYLDRLEIRERERTGLDTLKVGYNAVHGYYIQISRGQSHLAPINYVRRQTLKNAERYIIPELKEYEDKVLTSKGKALALEKQLYDELFDLLLPHLADLQQSASALAELDVLVNLAERAYTLNYTCPTFTDKPGIRIIEGRHPVVEQVLNEPFIANPLNLSPQRRMLIITGPNMGGKSTYMRQTALIALLAWIGSYVPAQNVEIGPIDRIFTRVGAADDLASGRSTFMVEMTETANILHNATENSLVLMDEIGRGTSTYDGLSLAWACAENLANKIKALTLFATHYFELTQLPEKMEGVANVHLDALEHGDTIAFMHSVQDGAASKSYGLAVAALAGVPKEVIKRARQKLRELESISPNAAATQVDGTQMSLLAAPEETSPAVEALENLDPDSLTPRQALEWIYRLKSLV.

621-628 contacts ATP; that stretch reads GPNMGGKS.

The protein belongs to the DNA mismatch repair MutS family.

Functionally, this protein is involved in the repair of mismatches in DNA. It is possible that it carries out the mismatch recognition step. This protein has a weak ATPase activity. In Salmonella arizonae (strain ATCC BAA-731 / CDC346-86 / RSK2980), this protein is DNA mismatch repair protein MutS.